A 111-amino-acid chain; its full sequence is Exocrine gland-secreted peptide 22 (111 aa).

Residues 1-24 (MNSVPVMLFSISILLAAMLTEGRG) form the signal peptide.

Belongs to the exocrine gland-secreted peptide family. In terms of tissue distribution, expressed in acinar cells of the lacrimal gland from where it is secreted into tears. Not detected in a range of other tissues tested including other exocrine glands, internal organs and sensory epithelia.

Its subcellular location is the secreted. Functionally, pheromone produced by juveniles which activates a small number of vomeronasal organ sensory neurons and exhibits a powerful inhibitory effect on adult male mating behavior. This chain is Exocrine gland-secreted peptide 22, found in Mus musculus (Mouse).